Reading from the N-terminus, the 416-residue chain is 5-hydroxytryptamine receptor 1A-beta (416 aa).

Topologically, residues 1–35 (MEGTNNTTGWTHFDSTSNRTSKSFDEEVKLSYQVV) are extracellular. N-linked (GlcNAc...) asparagine glycosylation is found at N5, N6, and N18. The helical transmembrane segment at 36–56 (TSFLLGALILCSIFGNACVVA) threads the bilayer. Residues 57-70 (AIALERSLQNVANY) lie on the Cytoplasmic side of the membrane. A helical membrane pass occupies residues 71–95 (LIGSLAVTDLMVSVLVLPMAALYQV). At 96–104 (LNRWTLGQI) the chain is on the extracellular side. Residues 105 to 129 (PCDIFISLDMLCCTSSILHLCVIAL) traverse the membrane as a helical segment. C106 and C189 are joined by a disulfide. The serotonin site is built by D113 and C117. Residues 130-132 (DRY) carry the DRY motif; important for ligand-induced conformation changes motif. The Cytoplasmic portion of the chain corresponds to 130–149 (DRYWAITEPIDYMKKRTPRR). Residues 150–171 (AAVLISVTWLVGFSISIPPMLI) form a helical membrane-spanning segment. At 172–195 (MRSQPSSMAEDRANSKQCKITQDP) the chain is on the extracellular side. Residues 196 to 218 (WYTIYSTFGAFYIPLTLMLVLYG) form a helical membrane-spanning segment. Residues 219–340 (RIFKAARFRI…LARERKTVKT (122 aa)) are Cytoplasmic-facing. Residues K339, T340, and G346 each coordinate 1D-myo-inositol 4-phosphate. A helical transmembrane segment spans residues 341–364 (LGIIMGTFILCWLPFFIVALVMPF). Residues 365 to 372 (CQESCFMP) lie on the Extracellular side of the membrane. Residues 373-397 (HWLKDVINWLGYSNSLLNPIIYAYF) form a helical membrane-spanning segment. The NPxxY motif; important for ligand-induced conformation changes and signaling motif lies at 390–394 (NPIIY). 1D-myo-inositol 4-phosphate contacts are provided by F397, N398, and K399. Residues 398–416 (NKDFQSAFKKIIKCHFCRA) lie on the Cytoplasmic side of the membrane.

The protein belongs to the G-protein coupled receptor 1 family. 5-hydroxytryptamine receptor subfamily.

The protein localises to the cell membrane. G-protein coupled receptor activity is regulated by lipids: phosphatidylinositol 4-phosphate increases HTR1A-mediated activity. In terms of biological role, G-protein coupled receptor for 5-hydroxytryptamine (serotonin). Also functions as a receptor for various drugs and psychoactive substances. Ligand binding causes a conformation change that triggers signaling via guanine nucleotide-binding proteins (G proteins) and modulates the activity of downstream effectors, such as adenylate cyclase. HTR1A is coupled to G(i)/G(o) G alpha proteins and mediates inhibitory neurotransmission: signaling inhibits adenylate cyclase activity and activates a phosphatidylinositol-calcium second messenger system that regulates the release of Ca(2+) ions from intracellular stores. Beta-arrestin family members regulate signaling by mediating both receptor desensitization and resensitization processes. This Takifugu rubripes (Japanese pufferfish) protein is 5-hydroxytryptamine receptor 1A-beta (htr1a-B).